The sequence spans 2211 residues: Coagulation factor V (2211 aa).

The first 28 residues, 1–28 (MFLACPGFWVLVVLGSSWAGWGNLGAEA), serve as a signal peptide directing secretion. 4 Plastocyanin-like domains span residues 30-193 (KLRQ…LLIC), 203-327 (TQKM…IDIK), 348-525 (KRWE…LLIC), and 535-686 (IQRA…FRDA). 2 F5/8 type A domains span residues 30–327 (KLRQ…IDIK) and 348–686 (KRWE…FRDA). Ca(2+) contacts are provided by aspartate 139 and aspartate 140. A disulfide bridge links cysteine 167 with cysteine 193. Asparagine 225, asparagine 239, asparagine 297, asparagine 382, and asparagine 460 each carry an N-linked (GlcNAc...) asparagine glycan. A disulfide bridge links cysteine 248 with cysteine 329. Residues cysteine 499 and cysteine 525 are joined by a disulfide bond. Asparagine 553 and asparagine 587 each carry an N-linked (GlcNAc...) asparagine glycan. Cysteine 607 and cysteine 688 are oxidised to a cystine. Threonine 644 is modified (phosphothreonine). Positions 696–1564 (SYEIIYEPSG…PDNIAAWYLR (869 aa)) are b. Sulfotyrosine occurs at positions 697, 701, and 730. Positions 742–1564 (SFRNSSLNQE…PDNIAAWYLR (823 aa)) are cleaved as a propeptide — activation peptide (connecting region). 4 N-linked (GlcNAc...) asparagine glycosylation sites follow: asparagine 745, asparagine 756, asparagine 774, and asparagine 780. The tract at residues 814–844 (LEHAGLDKNSALNPPMAEHSSPYSEDPREDH) is disordered. N-linked (GlcNAc...) asparagine glycans are attached at residues asparagine 902, asparagine 952, and asparagine 964. The segment covering 954–969 (TVNKLPNSPQNDSRTW) has biased composition (polar residues). Residues 954-1039 (TVNKLPNSPQ…PLSPRSFHPL (86 aa)) form a disordered region. Residues 995–1009 (PLQDRQDRRNSRLKE) show a composition bias toward basic and acidic residues. 6 N-linked (GlcNAc...) asparagine glycosylation sites follow: asparagine 1044, asparagine 1053, asparagine 1062, asparagine 1071, asparagine 1078, and asparagine 1094. 2 disordered regions span residues 1084-1162 (SLPD…IPNY) and 1195-1471 (QPSI…FGQT). 2 stretches are compositionally biased toward polar residues: residues 1091–1103 (TSPN…TSSP) and 1127–1160 (THST…SQIP). 30 tandem repeats follow at residues 1124 to 1137 (SDPT…SNRS), 1138 to 1151 (PDPT…SNRS), 1188 to 1196 (ATSLDLSQP), 1197 to 1205 (SISPDLGQM), 1206 to 1214 (ALSPDPGQE), 1215 to 1223 (SLSPDLGQT), 1224 to 1232 (SLSPDLSQE), 1233 to 1241 (SLSPDLGQT), 1242 to 1250 (ALSPDPSQE), 1251 to 1259 (SLSPDLGQT), 1260 to 1268 (ALSPDPSQE), 1269 to 1277 (SLSPDLGQT), 1278 to 1286 (ALSPDPGQE), 1287 to 1295 (SLSPDLGQT), 1296 to 1304 (SLSPDLSQE), 1305 to 1313 (SLSPDLGQT), 1314 to 1322 (ALSPDPSQE), 1323 to 1331 (SLSPDLGQT), 1332 to 1340 (ALSPDPSQE), 1341 to 1349 (SLSPDLGQT), 1350 to 1358 (SLSPDLGQE), 1359 to 1367 (SLSPDLGQT), 1368 to 1376 (ALSPDPSQE), 1377 to 1385 (SLSPDLGQT), 1386 to 1394 (SLSPDLGQE), 1395 to 1403 (SLSPDLGQT), 1404 to 1412 (ALSPDLSQE), 1413 to 1421 (SLSPDLGQT), 1422 to 1430 (PLSPDLSLE), and 1431 to 1439 (SLSPDLSQL). The segment at 1124 to 1151 (SDPTHSTTAPSNRSPDPTHSTTAPSNRS) is 2 X 14 AA tandem repeats. Residues 1188–1453 (ATSLDLSQPS…TSPPLDLNQT (266 aa)) are 30 X 9 AA approximate tandem repeats of [AS]-L-S-P-D-[LP]-[GS]-Q-[TE]. Polar residues-rich tracts occupy residues 1214–1234 (ESLS…QESL), 1241–1252 (TALSPDPSQESL), 1259–1270 (TALSPDPSQESL), 1286–1306 (ESLS…QESL), 1313–1324 (TALSPDPSQESL), 1331–1352 (TALS…TSLS), 1367–1388 (TALS…TSLS), and 1403–1414 (TALSPDLSQESL). Positions 1422–1441 (PLSPDLSLESLSPDLSQLDL) are enriched in low complexity. Residues 1440–1444 (DLKQT) form a 2-29; truncated repeat. The segment covering 1442–1463 (KQTSPPLDLNQTSHTSESSQSL) has biased composition (polar residues). One copy of the 2-30 repeat lies at 1445–1453 (SPPLDLNQT). N-linked (GlcNAc...) asparagine glycans are attached at residues asparagine 1451 and asparagine 1490. Residues tyrosine 1513, tyrosine 1529, tyrosine 1537, and tyrosine 1541 each carry the sulfotyrosine modification. 2 N-linked (GlcNAc...) asparagine glycosylation sites follow: asparagine 1550 and asparagine 1690. Plastocyanin-like domains are found at residues 1569–1738 (NRKY…LLIC) and 1748–1890 (NMPV…FLIV). One can recognise an F5/8 type A 3 domain in the interval 1569-1890 (NRKYYYIAAE…AGMQTPFLIV (322 aa)). Cysteines 1712 and 1738 form a disulfide. The Cu cation site is built by histidine 1830 and histidine 1832. The N-linked (GlcNAc...) asparagine glycan is linked to asparagine 1839. A Cu cation-binding site is contributed by aspartate 1872. Cystine bridges form between cysteine 1894–cysteine 2048 and cysteine 2053–cysteine 2208. 2 consecutive F5/8 type C domains span residues 1894–2048 (CKMP…LQGC) and 2053–2208 (CSTP…LFGC). N-linked (GlcNAc...) asparagine glycans are attached at residues asparagine 1997 and asparagine 2196.

The protein belongs to the multicopper oxidase family. Factor Va, the activated form of factor V, is composed of a heavy chain and a light chain, non-covalently bound. The interaction between the two chains is calcium-dependent. Forms heterodimer with SERPINA5. In terms of processing, thrombin activates factor V proteolytically to the active cofactor, factor Va (formation of a heavy chain at the N-terminus and a light chain at the C-terminus). Sulfation is required for efficient thrombin cleavage and activation and for full procoagulant activity. Post-translationally, activated protein C inactivates factor V and factor Va by proteolytic degradation.

The protein localises to the secreted. With respect to regulation, inhibited by SERPINA5. Central regulator of hemostasis. It serves as a critical cofactor for the prothrombinase activity of factor Xa that results in the activation of prothrombin to thrombin. The sequence is that of Coagulation factor V (F5) from Bos taurus (Bovine).